The sequence spans 322 residues: Probable ATP-dependent 6-phosphofructokinase (322 aa).

ATP-binding positions include Gly-11, 72 to 73, and 102 to 105; these read RF and GDGS. Asp-103 contributes to the Mg(2+) binding site. Residues 125–127, 169–171, Glu-222, Lys-249, and 255–258 each bind substrate; these read TID, MGR, and YLQR. The active-site Proton acceptor is Asp-127.

It belongs to the phosphofructokinase type A (PFKA) family. As to quaternary structure, homotetramer. Mg(2+) serves as cofactor.

It localises to the cytoplasm. It carries out the reaction beta-D-fructose 6-phosphate + ATP = beta-D-fructose 1,6-bisphosphate + ADP + H(+). Its pathway is carbohydrate degradation; glycolysis; D-glyceraldehyde 3-phosphate and glycerone phosphate from D-glucose: step 3/4. Catalyzes the phosphorylation of D-fructose 6-phosphate to fructose 1,6-bisphosphate by ATP, the first committing step of glycolysis. The sequence is that of Probable ATP-dependent 6-phosphofructokinase (pfkA) from Malacoplasma penetrans (strain HF-2) (Mycoplasma penetrans).